Reading from the N-terminus, the 765-residue chain is Protein transport protein Sec23A (765 aa).

Thr2 is subject to N-acetylthreonine. The Zn(2+) site is built by Cys61, Cys66, Cys85, and Cys88. Thr308 is subject to Phosphothreonine. One copy of the Gelsolin-like repeat lies at 632–718 (PEPVLLDSSS…EHGGSQARFL (87 aa)).

The protein belongs to the SEC23/SEC24 family. SEC23 subfamily. COPII is composed of at least five proteins: the Sec23/24 complex, the Sec13/31 complex and Sar1. Interacts with SEC23IP. Interacts with HTR4. Interacts with SEC16A. Interacts with SLC6A4. Interacts (as part of the Sec23/24 complex) with SEC22B; recruits SEC22B into COPII-coated vesicles and allows the transport of this cargo from the endoplasmic reticulum to the Golgi. Interacts (via Gelsolin-like repeat) with MIA2 and MIA3; specifically involved in the transport of large cargos like the collagen COL7A1. Interacts with DDHD1. Interacts with TMEM39A. Interacts with SACM1L; this interaction is reduced in the absence of TMEM39A. Interacts with kinase FAM20C; transport of FAM20C from the endoplasmic reticulum to the Golgi is likely to be mediated by COPII vesicles.

The protein resides in the cytoplasmic vesicle. Its subcellular location is the COPII-coated vesicle membrane. It is found in the endoplasmic reticulum membrane. The protein localises to the cytoplasm. It localises to the cytosol. Its function is as follows. Component of the coat protein complex II (COPII) which promotes the formation of transport vesicles from the endoplasmic reticulum (ER). The coat has two main functions, the physical deformation of the endoplasmic reticulum membrane into vesicles and the selection of cargo molecules for their transport to the Golgi complex. Required for the translocation of insulin-induced glucose transporter SLC2A4/GLUT4 to the cell membrane. In Pongo abelii (Sumatran orangutan), this protein is Protein transport protein Sec23A.